Here is a 942-residue protein sequence, read N- to C-terminus: WD repeat-containing protein 3 (942 aa).

WD repeat units follow at residues 21-60 (SQKGNIVFVTLRGEKGRYVAVPACEHVFIWDLRKGEKILI), 63-102 (GNKQEVTCLCPSPDGLHLAVGYEDGAIRIFSLLSGEGNIT), 105-144 (GHKAAVTSLKYDQLGGRLASGSKDTDVIIWDVINESGLYR), 147-186 (GHKDAVTQALFLRERNLLVTSGKDTMVKWWDLDNQHCFKT), and 189-228 (GHRTEVWGLVLVSEEKRLITGAADSELRAWDIDYLQEIDD). The interval 230 to 263 (EEPEPKKIKECPGIQDTPESEDSTLEADDEKSED) is disordered. The span at 247–260 (PESEDSTLEADDEK) shows a compositional bias: acidic residues. A Phosphoserine modification is found at S249. 8 WD repeats span residues 277–316 (EGRDRVVNLAVDKTGRILACHGTDSVLEVFCILSKAEVQK), 412–450 (GHRSDVRTLSFSSDNIAVLSAAADSIKIWNRSTLQCIRT), 452–490 (PCEYALCSFFVPGDRQVVIGTKTGNLQLYDLASGTLLET), 493–532 (AHDGALWSMSLSPDQRGFVTGGADKAVKFWDFELVTDKNS), 546–585 (QLDEDVLCVSYSPNQKLLAVSLLDCTVKVFYVDTLKFFLS), 588–629 (GHKL…RSLF), 630–669 (AHDDSVMYLRFVPKSHLFFTAGKDHKIKQWDADKFEHIQT), and 672–711 (GHHQEIWCLAVSPSGDYVVSASHDKSLRLWERTREPLILE). A Glycyl lysine isopeptide (Lys-Gly) (interchain with G-Cter in SUMO2) cross-link involves residue K473. The segment at 723–742 (EESVAKEDQPAVPGETQGDN) is disordered. S725 carries the phosphoserine modification.

The protein belongs to the WD repeat WDR3/UTP12 family. In terms of assembly, part of the small subunit (SSU) processome, composed of more than 70 proteins and the RNA chaperone small nucleolar RNA (snoRNA) U3.

The protein localises to the nucleus. It localises to the nucleolus. Part of the small subunit (SSU) processome, first precursor of the small eukaryotic ribosomal subunit. During the assembly of the SSU processome in the nucleolus, many ribosome biogenesis factors, an RNA chaperone and ribosomal proteins associate with the nascent pre-rRNA and work in concert to generate RNA folding, modifications, rearrangements and cleavage as well as targeted degradation of pre-ribosomal RNA by the RNA exosome. In Mus musculus (Mouse), this protein is WD repeat-containing protein 3 (Wdr3).